The chain runs to 253 residues: Phosphate import ATP-binding protein PstB (253 aa).

The region spanning 7–248 (MHSKGLDFFY…PGNKQTEDYI (242 aa)) is the ABC transporter domain. 39–46 (GPSGCGKS) is an ATP binding site.

Belongs to the ABC transporter superfamily. Phosphate importer (TC 3.A.1.7) family. The complex is composed of two ATP-binding proteins (PstB), two transmembrane proteins (PstC and PstA) and a solute-binding protein (PstS).

Its subcellular location is the cell inner membrane. The enzyme catalyses phosphate(out) + ATP + H2O = ADP + 2 phosphate(in) + H(+). In terms of biological role, part of the ABC transporter complex PstSACB involved in phosphate import. Responsible for energy coupling to the transport system. The polypeptide is Phosphate import ATP-binding protein PstB (Oleidesulfovibrio alaskensis (strain ATCC BAA-1058 / DSM 17464 / G20) (Desulfovibrio alaskensis)).